A 300-amino-acid chain; its full sequence is Small ribosomal subunit protein uS2 (300 aa).

The interval 228 to 300 (RAGLSADKDA…PAAEAPSTEA (73 aa)) is disordered. Residues 258 to 300 (AAPAAEAAPAAEAAPAAEAAPAAEAQAAPAAEAPAAEAPSTEA) are compositionally biased toward low complexity.

It belongs to the universal ribosomal protein uS2 family.

The polypeptide is Small ribosomal subunit protein uS2 (Rhodococcus jostii (strain RHA1)).